The primary structure comprises 572 residues: Methionine--tRNA ligase (572 aa).

The 'HIGH' region signature appears at 11–21; the sequence is PYINGIKHLGN. Zn(2+)-binding residues include Cys-143, Cys-146, Cys-156, and Cys-159. The 'KMSKS' region motif lies at 346 to 350; sequence QFSTS. Residue Thr-349 coordinates ATP.

Belongs to the class-I aminoacyl-tRNA synthetase family. MetG type 1 subfamily. As to quaternary structure, monomer. Zn(2+) is required as a cofactor.

It localises to the cytoplasm. It carries out the reaction tRNA(Met) + L-methionine + ATP = L-methionyl-tRNA(Met) + AMP + diphosphate. Is required not only for elongation of protein synthesis but also for the initiation of all mRNA translation through initiator tRNA(fMet) aminoacylation. The protein is Methionine--tRNA ligase of Cereibacter sphaeroides (strain KD131 / KCTC 12085) (Rhodobacter sphaeroides).